Here is a 302-residue protein sequence, read N- to C-terminus: Putative S-adenosyl-L-methionine-dependent methyltransferase MAP_1622c (302 aa).

S-adenosyl-L-methionine-binding positions include Asp129 and Asp158–Leu159.

The protein belongs to the UPF0677 family.

Functionally, exhibits S-adenosyl-L-methionine-dependent methyltransferase activity. This Mycolicibacterium paratuberculosis (strain ATCC BAA-968 / K-10) (Mycobacterium paratuberculosis) protein is Putative S-adenosyl-L-methionine-dependent methyltransferase MAP_1622c.